The chain runs to 119 residues: Flagellar transcriptional regulator FlhD (119 aa).

The protein belongs to the FlhD family. Homodimer; disulfide-linked. Forms a heterohexamer composed of two FlhC and four FlhD subunits. Each FlhC binds a FlhD dimer, forming a heterotrimer, and a hexamer assembles by dimerization of two heterotrimers.

The protein localises to the cytoplasm. Functions in complex with FlhC as a master transcriptional regulator that regulates transcription of several flagellar and non-flagellar operons by binding to their promoter region. Activates expression of class 2 flagellar genes, including fliA, which is a flagellum-specific sigma factor that turns on the class 3 genes. Also regulates genes whose products function in a variety of physiological pathways. In Shigella boydii serotype 4 (strain Sb227), this protein is Flagellar transcriptional regulator FlhD.